The primary structure comprises 41 residues: Trypsin inhibitor (41 aa).

Disulfide bonds link C15–C26, C17–C24, and C29–C37.

Has two active sites that simultaneously bind and inhibit trypsin. The polypeptide is Trypsin inhibitor (Trichosanthes kirilowii (Chinese snake gourd)).